The following is a 505-amino-acid chain: MALIEICLALVVIGYLIYKWSTATFKTFEERKLYFEKPYPFVGNMAAAALQKSSFQRQLTEFYERTRQHKLVGFFNMRTPMITLNDPELIKKVCVKDFDHFPNHQPFITSNDRLFNDMLSVMRDQRWKHMRNTLTPVFTAAKMRNMFTLMNESFAECLQHLDSSSKTLPGRKGFEVDMKVMCNKLSNDIIATTAFGLKVNSYDNPKNEFYEIGQSLVFSRGLQFFKFMLSTLVPKLFSLLKLTIFDSAKVDYFARLVVEAMQYREKHNITRPDMIQLLMEAKNESEDKWTDDEIVAQCFIFFFAAFENNSNLICTTTYELLYNPDVQERLYEEIVETKKALNGAPLTYDAVQKMTYMDMVISESLRKWTLAAATDRLCSKDYTLTDDDGTKLFDFKVGDRINIPISGLHLDDRYFPEPRKFDPDRFSEERKGDMVPYTYLPFGVGPRNCIGNRYALMQVKGMLFNLLLHYKIEASPRTIKDLWGSASGFNFTPRSGFWMHLVPRK.

Cys-449 is a heme binding site.

Belongs to the cytochrome P450 family. The cofactor is heme.

It is found in the endoplasmic reticulum membrane. It localises to the microsome membrane. Its function is as follows. May be involved in the metabolism of insect hormones and in the breakdown of synthetic insecticides. The polypeptide is Cytochrome P450 9b2 (Cyp9b2) (Drosophila melanogaster (Fruit fly)).